Reading from the N-terminus, the 181-residue chain is Immunity-related GTPase family M protein (181 aa).

The IRG-type G domain occupies 32–181 (TPVNITMAGD…NLQKERVCEY (150 aa)). GTP contacts are provided by residues 41–48 (DSGNGMST), 66–70 (TELVK), and 147–149 (KLD).

The protein belongs to the TRAFAC class dynamin-like GTPase superfamily. IRG family. In terms of assembly, interacts with ULK1; promoting the coassembly of ULK1 and BECN1. Interacts with BECN1; enhancing BECN1-interacting partners and influencing the composition of the BECN1 complex. Interacts with ATG16L1. Interacts with NOD2; promoting IRGM 'Lys-63'-linked polyubiquitination, which is required for interactions with the core autophagy factors. Interacts with STX17; promoting STX17 recruitment to autophagosomes. Interacts with ATG8 proteins (GABARAP, GABARAPL1, GABARAPL2, MAP1LC3A, MAP1LC3B and MAP1LC3C); promoting STX17 recruitment to autophagosomes. Interacts with TFEB; promoting association between TFEB and PPP3CB and TFEB dephosphorylation. Interacts with PPP3CB; promoting association between TFEB and PPP3CB and TFEB dephosphorylation. Interacts with NLRP3; preventing NLRP3 inflammasome assembly and promoting SQSTM1/p62-dependent autophagic degradation of NLRP3. Interacts with CGAS; promoting SQSTM1/p62-dependent autophagic degradation of CGAS. Interacts with RIGI/RIG-I; promoting SQSTM1/p62-dependent autophagic degradation of RIGI/RIG-I. Interacts with NOD1; promoting SQSTM1/p62-dependent autophagic degradation of RIGI/RIG-I. Interacts with NOD2; promoting SQSTM1/p62-dependent autophagic degradation of RIGI/RIG-I. Interacts with RIPK2; promoting SQSTM1/p62-dependent autophagic degradation of RIGI/RIG-I. In terms of processing, ubiquitinated via 'Lys-63'-linked polyubiquitination in a NOD2-dependent process. 'Lys-63'-linked polyubiquitination is required for interactions with the core autophagy factors. In terms of tissue distribution, widely expressed (at protein level). Expressed in several tissues including colon, small bowel and peripheral blood leukocytes.

Its subcellular location is the golgi apparatus membrane. The protein resides in the cell membrane. It localises to the cytoplasmic vesicle. The protein localises to the phagosome membrane. It is found in the autophagosome membrane. Its subcellular location is the lysosome membrane. The protein resides in the late endosome membrane. It localises to the mitochondrion membrane. The protein localises to the cell projection. It is found in the phagocytic cup. Its subcellular location is the mitochondrion. The enzyme catalyses GTP + H2O = GDP + phosphate + H(+). Its function is as follows. Immunity-related GTPase that plays important roles in innate immunity and inflammatory response. Acts as a dynamin-like protein that binds to intracellular membranes and promotes remodeling and trafficking of those membranes. Required for clearance of acute protozoan and bacterial infections by interacting with autophagy and lysosome regulatory proteins, thereby promoting the fusion of phagosomes with lysosomes for efficient degradation of cargo including microbes. Regulates selective autophagy, including xenophagy and mitophagy, both directly and indirectly. Directly regulates autophagy by acting as a molecular adapter that promotes the coassembly of the core autophagy machinery to mediate antimicrobial defense: IRGM (1) activates AMPK, which in turn phosphorylates ULK1 and BECN1 to induce autophagy, (2) promotes the coassembly of ULK1 and BECN1, enhancing BECN1-interacting partners and (3) influences the composition of the BECN1 complex, by competing with the negative regulators BCL2 and RUBCN, to trigger autophagy. Also activates autophagy by promoting recruitment of STX17 to autophagosomes. In collaboration with ATG8 proteins, regulate lysosomal biogenesis, a fundamental process for any autophagic pathway, by promoting TFEB dephosphorylation. Also modulates autophagy by assisting with autophagosome formation and preventing lysosomal deacidification. While activating autophagy, acts as a key negative regulator of the inflammatory and interferon responses both by (1) promoting mitophagy and (2) mediating autophagy-dependent degradation of effectors of the inflammatory response. Promotes degradation of damaged and IFNG/IFN-gamma-stressed mitochondria via mitophagy, preventing cytosolic release of ligands that activate inflammation. Acts as a suppressor of inflammation by promoting recruitment of inflammation effectors, such as CGAS, RIGI/RIG-I and NLRP3, to autophagosome membranes, leading to their SQSTM1/p62-dependent autophagic degradation. Also directly inhibits assembly of the NLRP3 inflammasome by preventing the association between NLRP3 and PYCARD. Acts as a negative regulator of antiviral innate immune response by suppressing the RIPK2-dependent pro-inflammatory response: mediates recruitment of RIPosomes, composed of RIPK2 and NOD1 or NOD2, to autophagosome membranes, promoting their SQSTM1/p62-dependent autophagic degradation. Functionally, acts as a positive regulator of mitophagy in response to intracellular mycobacteria infection: specifically binds cardiolipin, leading to its translocation to mitochondria, where it promotes affected mitochondrial fission and mitophagy. In terms of biological role, (Microbial infection) Following infection by hepatitis C virus (HCV), promotes HCV-triggered membrane remodeling, leading to autophagy and Golgi fragmentation, a step required for HCV replication. The sequence is that of Immunity-related GTPase family M protein from Homo sapiens (Human).